Consider the following 97-residue polypeptide: Co-chaperonin GroES (97 aa).

The protein belongs to the GroES chaperonin family. In terms of assembly, heptamer of 7 subunits arranged in a ring. Interacts with the chaperonin GroEL.

The protein resides in the cytoplasm. Together with the chaperonin GroEL, plays an essential role in assisting protein folding. The GroEL-GroES system forms a nano-cage that allows encapsulation of the non-native substrate proteins and provides a physical environment optimized to promote and accelerate protein folding. GroES binds to the apical surface of the GroEL ring, thereby capping the opening of the GroEL channel. The polypeptide is Co-chaperonin GroES (Sodalis glossinidius (strain morsitans)).